We begin with the raw amino-acid sequence, 133 residues long: Exonuclease VapC9 (133 aa).

In terms of domain architecture, PINc spans 5–113; it reads YLVDASALYA…LVLVTQDREL (109 aa). Mg(2+) contacts are provided by D8, D92, and D110.

The protein belongs to the PINc/VapC protein family. As to quaternary structure, homodimer, 2 of which then form a homotetramer. Requires Mg(2+) as cofactor.

Inhibited by EDTA. Toxic component of a type II toxin-antitoxin (TA) system. Functionally, has ribonuclease activity. Has a slow ssDNA exonuclease activity. This is Exonuclease VapC9 from Pyrobaculum aerophilum (strain ATCC 51768 / DSM 7523 / JCM 9630 / CIP 104966 / NBRC 100827 / IM2).